We begin with the raw amino-acid sequence, 30 residues long: Trypsin inhibitor 2 (30 aa).

Disulfide bonds link cysteine 3–cysteine 20, cysteine 10–cysteine 22, and cysteine 16–cysteine 29.

It belongs to the protease inhibitor I7 (squash-type serine protease inhibitor) family.

It localises to the secreted. Its function is as follows. Inhibits trypsin. The sequence is that of Trypsin inhibitor 2 from Luffa aegyptiaca (Sponge gourd).